Reading from the N-terminus, the 462-residue chain is Argininosuccinate lyase (462 aa).

The protein belongs to the lyase 1 family. Argininosuccinate lyase subfamily.

The protein localises to the cytoplasm. It carries out the reaction 2-(N(omega)-L-arginino)succinate = fumarate + L-arginine. Its pathway is amino-acid biosynthesis; L-arginine biosynthesis; L-arginine from L-ornithine and carbamoyl phosphate: step 3/3. The protein is Argininosuccinate lyase of Bacillus cereus (strain ATCC 14579 / DSM 31 / CCUG 7414 / JCM 2152 / NBRC 15305 / NCIMB 9373 / NCTC 2599 / NRRL B-3711).